A 169-amino-acid polypeptide reads, in one-letter code: Transcription antitermination protein NusB (169 aa).

The disordered stretch occupies residues 147-169 (RGLIDQSFSRPQKPESEATEIEE).

Belongs to the NusB family.

Functionally, involved in transcription antitermination. Required for transcription of ribosomal RNA (rRNA) genes. Binds specifically to the boxA antiterminator sequence of the ribosomal RNA (rrn) operons. The polypeptide is Transcription antitermination protein NusB (Chlorobium chlorochromatii (strain CaD3)).